A 402-amino-acid chain; its full sequence is DNA primase DnaG (402 aa).

In terms of domain architecture, Toprim spans 165-243 (PNLIIVEGRA…KIDFVARAPV (79 aa)). Mg(2+) contacts are provided by Glu-171, Asp-216, and Asp-218.

Belongs to the archaeal DnaG primase family. As to quaternary structure, forms a ternary complex with MCM helicase and DNA. Component of the archaeal exosome complex. The cofactor is Mg(2+).

It carries out the reaction ssDNA + n NTP = ssDNA/pppN(pN)n-1 hybrid + (n-1) diphosphate.. Its function is as follows. RNA polymerase that catalyzes the synthesis of short RNA molecules used as primers for DNA polymerase during DNA replication. Also part of the exosome, which is a complex involved in RNA degradation. Acts as a poly(A)-binding protein that enhances the interaction between heteromeric, adenine-rich transcripts and the exosome. This is DNA primase DnaG from Saccharolobus islandicus (strain Y.N.15.51 / Yellowstone #2) (Sulfolobus islandicus).